We begin with the raw amino-acid sequence, 468 residues long: Acetyl-CoA decarbonylase/synthase complex subunit gamma 2 (468 aa).

One can recognise a 4Fe-4S domain in the interval 1 to 60; it reads MKINSPLEAYKYLPQTNCGECGEATCMAFASKLIDRSGKPTQCPPLVKEKKFAKKLAELE. 4 residues coordinate [4Fe-4S] cluster: Cys-18, Cys-21, Cys-26, and Cys-43.

Heterodimer of delta and gamma chains. The ACDS complex is made up of alpha, epsilon, beta, gamma and delta chains with a probable stoichiometry of (alpha(2)epsilon(2))(4)-beta(8)-(gamma(1)delta(1))(8). The cofactor is corrinoid. [4Fe-4S] cluster is required as a cofactor.

The catalysed reaction is 5,6,7,8-tetrahydrosarcinapterin + methyl-Co(III)-[corrinoid Fe-S protein] = 5-methyltetrahydrosarcinapterin + Co(I)-[corrinoid Fe-S protein] + H(+). Its pathway is one-carbon metabolism; methanogenesis from acetate. Functionally, part of a complex that catalyzes the reversible cleavage of acetyl-CoA, allowing growth on acetate as sole source of carbon and energy. This chain is Acetyl-CoA decarbonylase/synthase complex subunit gamma 2, found in Methanosarcina thermophila.